An 88-amino-acid chain; its full sequence is Large ribosomal subunit protein bL27 (88 aa).

A disordered region spans residues 1–24 (MAHKKAGGSSRNGRDSEGRRLGVK).

This sequence belongs to the bacterial ribosomal protein bL27 family.

The sequence is that of Large ribosomal subunit protein bL27 from Methylobacterium radiotolerans (strain ATCC 27329 / DSM 1819 / JCM 2831 / NBRC 15690 / NCIMB 10815 / 0-1).